The chain runs to 526 residues: Tyrosine-protein kinase transforming protein Src (526 aa).

Residues 1–57 (MGSSKSKPKDPSQRRRSLEPPDSTHHGGFPASQTPNKTAAPDTHRTPSRSFGTVATE) are disordered. A lipid anchor (N-myristoyl glycine; by host) is attached at glycine 2. Residues 7-25 (KPKDPSQRRRSLEPPDSTH) are compositionally biased toward basic and acidic residues. The region spanning 81 to 142 (GGVTTFVALY…PSNYVAPSDS (62 aa)) is the SH3 domain. The region spanning 148 to 245 (WYFGKITRRE…GLCHRLTNVC (98 aa)) is the SH2 domain. In terms of domain architecture, Protein kinase spans 267 to 517 (LRLEVKLGQG…TFEYLQAQLL (251 aa)). ATP-binding positions include 273-281 (LGQGCFGEV) and lysine 295. Residue aspartate 386 is the Proton acceptor of the active site. Residue tyrosine 416 is modified to Phosphotyrosine; by autocatalysis.

Belongs to the protein kinase superfamily. Tyr protein kinase family. SRC subfamily. As to quaternary structure, homodimer. Post-translationally, the phosphorylated form is termed pp60v-src.

The enzyme catalyses L-tyrosyl-[protein] + ATP = O-phospho-L-tyrosyl-[protein] + ADP + H(+). This phosphoprotein, required for both the initiation and the maintenance of neoplastic transformation, is a protein kinase that catalyzes the phosphorylation of tyrosine residues in vitro. Causes mitotic slippage in addition to cytokinesis failure in the host cell. Phosphorylates and attenuates the activity of host CDK1, possibly causing the mitotic slippage. This is Tyrosine-protein kinase transforming protein Src (V-SRC) from Rous sarcoma virus subgroup A (strain Schmidt-Ruppin) (RSV-SR-A).